Consider the following 295-residue polypeptide: MSKIIGSDRVKRGMAEMQKGGVIMDVVNAEQARIAEEAGAVAVMALERVPSDIRAAGGVARMANPKIVEEVMNAVSIPVMAKARIGHITEARVLEAMGVDYIDESEVLTPADEEYHLRKDQFTVPFVCGCRNLGEAARRIGEGAAMLRTKGEPGTGNIVEAVRHMRQVNSEVSRLTVMNDDEIMTFAKDIGAPYEILKQIKDNGRLPVVNFAAGGVATPQDAALMMELGADGVFVGSGIFKSEDPEKFAKAIVQATTHYQDYELIGRLASELGTAMKGLDINQLSLEERMQERGW.

Aspartate 25 provides a ligand contact to D-ribose 5-phosphate. Residue lysine 82 is the Schiff-base intermediate with D-ribose 5-phosphate of the active site. Glycine 154 is a D-ribose 5-phosphate binding site. Arginine 166 serves as a coordination point for D-glyceraldehyde 3-phosphate. Residues glycine 215 and 236-237 (GS) each bind D-ribose 5-phosphate.

Belongs to the PdxS/SNZ family. In terms of assembly, in the presence of PdxT, forms a dodecamer of heterodimers.

It catalyses the reaction aldehydo-D-ribose 5-phosphate + D-glyceraldehyde 3-phosphate + L-glutamine = pyridoxal 5'-phosphate + L-glutamate + phosphate + 3 H2O + H(+). The protein operates within cofactor biosynthesis; pyridoxal 5'-phosphate biosynthesis. In terms of biological role, catalyzes the formation of pyridoxal 5'-phosphate from ribose 5-phosphate (RBP), glyceraldehyde 3-phosphate (G3P) and ammonia. The ammonia is provided by the PdxT subunit. Can also use ribulose 5-phosphate and dihydroxyacetone phosphate as substrates, resulting from enzyme-catalyzed isomerization of RBP and G3P, respectively. The polypeptide is Pyridoxal 5'-phosphate synthase subunit PdxS (Staphylococcus aureus (strain Mu3 / ATCC 700698)).